The primary structure comprises 398 residues: 1-deoxy-D-xylulose 5-phosphate reductoisomerase (398 aa).

Positions 10, 11, 12, 13, 36, 37, 38, and 124 each coordinate NADPH. 1-deoxy-D-xylulose 5-phosphate is bound at residue Lys125. Position 126 (Glu126) interacts with NADPH. Asp150 contributes to the Mn(2+) binding site. The 1-deoxy-D-xylulose 5-phosphate site is built by Ser151, Glu152, Ser186, and His209. Glu152 contributes to the Mn(2+) binding site. Gly215 is an NADPH binding site. 1-deoxy-D-xylulose 5-phosphate contacts are provided by Ser222, Asn227, Lys228, and Glu231. Position 231 (Glu231) interacts with Mn(2+).

It belongs to the DXR family. As to quaternary structure, homodimer. It depends on Mg(2+) as a cofactor. Mn(2+) serves as cofactor.

It catalyses the reaction 2-C-methyl-D-erythritol 4-phosphate + NADP(+) = 1-deoxy-D-xylulose 5-phosphate + NADPH + H(+). The protein operates within isoprenoid biosynthesis; isopentenyl diphosphate biosynthesis via DXP pathway; isopentenyl diphosphate from 1-deoxy-D-xylulose 5-phosphate: step 1/6. Catalyzes the NADPH-dependent rearrangement and reduction of 1-deoxy-D-xylulose-5-phosphate (DXP) to 2-C-methyl-D-erythritol 4-phosphate (MEP). In Serratia proteamaculans (strain 568), this protein is 1-deoxy-D-xylulose 5-phosphate reductoisomerase.